Consider the following 894-residue polypeptide: Valine--tRNA ligase (894 aa).

Residues 1–22 (MKSIQTPSKSHTNTKETPVMSQ) show a composition bias toward polar residues. The segment at 1–28 (MKSIQTPSKSHTNTKETPVMSQEETKGY) is disordered. The short motif at 69 to 79 (PNVTGSLHIGH) is the 'HIGH' region element. Residues 554–558 (KMSKS) carry the 'KMSKS' region motif. ATP is bound at residue Lys-557. Positions 832–894 (IISRLEKQQE…VKVELQGIKG (63 aa)) form a coiled coil.

This sequence belongs to the class-I aminoacyl-tRNA synthetase family. ValS type 1 subfamily. As to quaternary structure, monomer.

It is found in the cytoplasm. It carries out the reaction tRNA(Val) + L-valine + ATP = L-valyl-tRNA(Val) + AMP + diphosphate. Catalyzes the attachment of valine to tRNA(Val). As ValRS can inadvertently accommodate and process structurally similar amino acids such as threonine, to avoid such errors, it has a 'posttransfer' editing activity that hydrolyzes mischarged Thr-tRNA(Val) in a tRNA-dependent manner. The polypeptide is Valine--tRNA ligase (Wolinella succinogenes (strain ATCC 29543 / DSM 1740 / CCUG 13145 / JCM 31913 / LMG 7466 / NCTC 11488 / FDC 602W) (Vibrio succinogenes)).